Here is a 204-residue protein sequence, read N- to C-terminus: Outer-membrane lipoprotein carrier protein (204 aa).

The N-terminal stretch at 1-21 is a signal peptide; it reads MKKYLNLTALLLVGISNVTWA.

This sequence belongs to the LolA family. In terms of assembly, monomer.

It localises to the periplasm. Its function is as follows. Participates in the translocation of lipoproteins from the inner membrane to the outer membrane. Only forms a complex with a lipoprotein if the residue after the N-terminal Cys is not an aspartate (The Asp acts as a targeting signal to indicate that the lipoprotein should stay in the inner membrane). This is Outer-membrane lipoprotein carrier protein from Histophilus somni (strain 129Pt) (Haemophilus somnus).